An 83-amino-acid polypeptide reads, in one-letter code: Small ribosomal subunit protein bS16 (83 aa).

This sequence belongs to the bacterial ribosomal protein bS16 family.

The chain is Small ribosomal subunit protein bS16 from Shewanella halifaxensis (strain HAW-EB4).